The primary structure comprises 221 residues: uncharacterized protein (221 aa).

6 helical membrane-spanning segments follow: residues 33 to 55, 70 to 92, 99 to 121, 125 to 147, 154 to 176, and 186 to 208; these read YFLL…ISYI, FGYR…QKIV, LEML…FIII, YGAY…YTLL, YFND…SFWI, and IISM…ITLI.

It localises to the cell membrane. This is an uncharacterized protein from Aquifex aeolicus (strain VF5).